Reading from the N-terminus, the 422-residue chain is Phospholipase D Z (422 aa).

Residues 1-18 form the signal peptide; the sequence is MMMKLLFLIALFGCVVNS. Asn53 is a glycosylation site (N-linked (GlcNAc...) asparagine). One can recognise a PLD phosphodiesterase 1 domain in the interval 148-175; it reads GAGILHTKVIVVDQVSAYLGSANLDWRS. Active-site residues include His153, Lys155, and Asp160. 2 N-linked (GlcNAc...) asparagine glycosylation sites follow: Asn225 and Asn320. A PLD phosphodiesterase 2 domain is found at 357–383; the sequence is FTRVNHAKYMVTDEQSYVGTSNWSEDY. Catalysis depends on residues His362, Lys364, and Asp369. The N-linked (GlcNAc...) asparagine glycan is linked to Asn378.

The protein belongs to the phospholipase D family.

The catalysed reaction is a 1,2-diacyl-sn-glycero-3-phosphocholine + H2O = a 1,2-diacyl-sn-glycero-3-phosphate + choline + H(+). Inhibited by butan-1-ol. In terms of biological role, hydrolyzes membrane phospholipids, such as PtdCho (phosphatidylcholine), producing the free headgroup and PtdOH (phosphatidic acid; signaling molecule on its own). The sequence is that of Phospholipase D Z (pldZ) from Dictyostelium discoideum (Social amoeba).